The primary structure comprises 230 residues: MSNNAIKDWPEDERPREKLLKRGAAALSDAELLALVLRTGDAAAGKSAIDLGRELLERFDGNLRELAQAELNELQQIKGLGLAKAASIKAAFTLGKRFQARRLETLERFTSPAQVFDFFHHELRDNRKELFLTLLLDGKNRITRKVQVSEGSLNQSIVHPREVFAPAVRESAAAVIFIHNHPSGDPAPSREDHEITRRLNEAGEILGIKVLDHIIIGDGAYFSFVESGLL.

An MPN domain is found at 108–230 (RFTSPAQVFD…YFSFVESGLL (123 aa)). Residues His-179, His-181, and Asp-192 each contribute to the Zn(2+) site. The JAMM motif signature appears at 179 to 192 (HNHPSGDPAPSRED).

Belongs to the UPF0758 family.

The sequence is that of UPF0758 protein Glov_0523 from Trichlorobacter lovleyi (strain ATCC BAA-1151 / DSM 17278 / SZ) (Geobacter lovleyi).